Here is a 1088-residue protein sequence, read N- to C-terminus: uncharacterized protein (1088 aa).

At Ser-299 the chain carries Phosphoserine. The disordered stretch occupies residues Pro-954–Lys-980. The span at Ser-956–Glu-968 shows a compositional bias: low complexity. Residue Ser-984 is modified to Phosphoserine. Thr-1013 bears the Phosphothreonine mark. The interval Met-1063 to Ser-1088 is disordered. The residue at position 1081 (Ser-1081) is a Phosphoserine.

This is an uncharacterized protein from Saccharomyces cerevisiae (strain ATCC 204508 / S288c) (Baker's yeast).